The following is a 366-amino-acid chain: UDP-N-acetylglucosamine--N-acetylmuramyl-(pentapeptide) pyrophosphoryl-undecaprenol N-acetylglucosamine transferase (366 aa).

UDP-N-acetyl-alpha-D-glucosamine is bound by residues 14-16, asparagine 125, arginine 168, serine 196, and glutamine 297; that span reads TGG.

This sequence belongs to the glycosyltransferase 28 family. MurG subfamily.

The protein resides in the cell inner membrane. The enzyme catalyses di-trans,octa-cis-undecaprenyl diphospho-N-acetyl-alpha-D-muramoyl-L-alanyl-D-glutamyl-meso-2,6-diaminopimeloyl-D-alanyl-D-alanine + UDP-N-acetyl-alpha-D-glucosamine = di-trans,octa-cis-undecaprenyl diphospho-[N-acetyl-alpha-D-glucosaminyl-(1-&gt;4)]-N-acetyl-alpha-D-muramoyl-L-alanyl-D-glutamyl-meso-2,6-diaminopimeloyl-D-alanyl-D-alanine + UDP + H(+). It functions in the pathway cell wall biogenesis; peptidoglycan biosynthesis. In terms of biological role, cell wall formation. Catalyzes the transfer of a GlcNAc subunit on undecaprenyl-pyrophosphoryl-MurNAc-pentapeptide (lipid intermediate I) to form undecaprenyl-pyrophosphoryl-MurNAc-(pentapeptide)GlcNAc (lipid intermediate II). The protein is UDP-N-acetylglucosamine--N-acetylmuramyl-(pentapeptide) pyrophosphoryl-undecaprenol N-acetylglucosamine transferase of Rhodopseudomonas palustris (strain ATCC BAA-98 / CGA009).